A 538-amino-acid polypeptide reads, in one-letter code: Natural resistance-associated macrophage protein 1 (538 aa).

Residues 1–36 (MTGDTDPPKQSRTQYGSISSSPSPGPPQVPPGGTYL) are disordered. At 1-54 (MTGDTDPPKQSRTQYGSISSSPSPGPPQVPPGGTYLSEKIPIPNAEPGTFSLRK) the chain is on the cytoplasmic side. A helical transmembrane segment spans residues 55–75 (LWAFTGPGFLMSIAYLDPGNI). The Extracellular portion of the chain corresponds to 76 to 81 (QSDLQA). A helical transmembrane segment spans residues 82–102 (GAVAGFKLLWVLLWATVLGLL). At 103–139 (CQRLAARLGVVTGKDLGEICHLYYPKVPRTLLWLNME) the chain is on the cytoplasmic side. Residues 140–160 (LAIVGSDMQEVIGTAIAFNLL) form a helical membrane-spanning segment. Over 161–164 (SAGR) the chain is Extracellular. Residues 165–185 (IPLWGGVLITVVDTFFFLYLN) traverse the membrane as a helical segment. At 186–193 (NYGLRKLE) the chain is on the cytoplasmic side. The helical transmembrane segment at 194–214 (AFFAFLIAIMAFTFGYEYVVA) threads the bilayer. Topologically, residues 215–240 (RPAQGALLRGLFLPSCSGCGQPELLQ) are extracellular. A helical transmembrane segment spans residues 241 to 261 (AVGIVGAIIMPHNIYLHSALV). Residues 262-286 (KSREVDRTRREDIREANMYFLIEST) lie on the Cytoplasmic side of the membrane. Residues 287–307 (IALFVSFFINLFVMAVFGQAF) form a helical membrane-spanning segment. The Extracellular segment spans residues 308 to 346 (YQQTNQAAFNICANSSLHDYAKIFPRNNLTVAVDFYQGG). Residues N321 and N335 are each glycosylated (N-linked (GlcNAc...) asparagine). Residues 347–367 (VILGCLFGPAALYIWAVGLLA) form a helical membrane-spanning segment. Over 368 to 394 (AGQSSTMTGTYAGQFVMEGFLKLRWSR) the chain is Cytoplasmic. The helical transmembrane segment at 395–415 (FARLLLTRSCAILPALLVAVF) threads the bilayer. Topologically, residues 416-432 (KELQDLSSLNDLLNVLQ) are extracellular. The helical transmembrane segment at 433 to 453 (SLLLPFAVLPILTFTSMPALM) threads the bilayer. Residues 454 to 468 (QEFASGRVNKVITSS) lie on the Cytoplasmic side of the membrane. A helical transmembrane segment spans residues 469–489 (IMLLVCAINFYFLVSYLPSLP). The Extracellular segment spans residues 490–492 (HPA). Residues 493–513 (YFGLVALLAVIYLGLTTYLVW) traverse the membrane as a helical segment. Over 514–538 (TCLIAHGATLLVHSSHQHFLYGLLE) the chain is Cytoplasmic.

The protein belongs to the NRAMP family.

It localises to the late endosome membrane. The protein localises to the lysosome membrane. The catalysed reaction is Zn(2+)(in) + H(+)(out) = Zn(2+)(out) + H(+)(in). The enzyme catalyses Fe(2+)(in) + H(+)(out) = Fe(2+)(out) + H(+)(in). It catalyses the reaction Mn(2+)(in) + H(+)(out) = Mn(2+)(out) + H(+)(in). Its function is as follows. Macrophage-specific antiporter that fluxes metal ions in either direction against a proton gradient. Localized to late endosomal lysosomal membranes, delivers bivalent cations from the cytosol into these acidic compartments where they may directly affect antimicrobial activity. Involved in iron metabolism and host natural resistance to infection with intracellular parasites. Pathogen resistance involves sequestration of Fe(2+) and Mn(2+), cofactors of both prokaryotic and eukaryotic catalases and superoxide dismutases, not only to protect the macrophage against its own generation of reactive oxygen species, but to deny the cations to the pathogen for synthesis of its protective enzymes. The protein is Natural resistance-associated macrophage protein 1 (SLC11A1) of Sus scrofa (Pig).